The chain runs to 1459 residues: PPE family protein PPE34 (1459 aa).

Belongs to the mycobacterial PPE family. Interacts with human TLR2.

The protein localises to the cell membrane. Its subcellular location is the secreted. The protein resides in the cell wall. It is found in the cell surface. Facilitates a shift in the ensuing immunity toward the Th2 phenotype and could aid in immune evasion by mycobacteria. Interacts with human Toll-like receptor 2 (TLR2) and triggers functional maturation of human dendritic cells (DCs), leading to secretion of IL-4, IL-5 and IL-10 from CD4(+) T cells and induction of Th2 immune response. Maturation of DCs involves PI3K, ERK1/2, p38 MAPK and NF-kappa-B signaling pathways. This is PPE family protein PPE34 from Mycobacterium tuberculosis (strain ATCC 25618 / H37Rv).